Reading from the N-terminus, the 394-residue chain is Guanine nucleotide-binding protein G(s) subunit alpha isoforms short (394 aa).

Positions 1-23 are disordered; it reads MGCLGNSKTEDQRNEEKAQREAN. The N-palmitoyl glycine moiety is linked to residue glycine 2. Cysteine 3 carries S-palmitoyl cysteine lipidation. The segment covering 8–23 has biased composition (basic and acidic residues); sequence KTEDQRNEEKAQREAN. Residues 39–394 enclose the G-alpha domain; sequence ATHRLLLLGA…RMHLRQYELL (356 aa). The tract at residues 42 to 55 is G1 motif; that stretch reads RLLLLGAGESGKST. 47-55 contributes to the GTP binding site; it reads GAGESGKST. Residue serine 54 participates in Mg(2+) binding. A disordered region spans residues 68–90; sequence FNGEGGEEDPQAARSNSDGEKAT. The G2 motif stretch occupies residues 196–204; the sequence is DLLRCRVLT. Residues 197 to 204, 223 to 227, and 292 to 295 contribute to the GTP site; these read LLRCRVLT, DVGGQ, and NKQD. Threonine 204 contributes to the Mg(2+) binding site. Residues 219 to 228 are G3 motif; it reads FHMFDVGGQR. The interval 288-295 is G4 motif; sequence ILFLNKQD. Residue lysine 300 forms a Glycyl lysine isopeptide (Lys-Gly) (interchain with G-Cter in ubiquitin) linkage. Serine 352 carries the post-translational modification Phosphoserine. The segment at 364 to 369 is G5 motif; the sequence is TCAVDT. Residue alanine 366 participates in GTP binding.

It belongs to the G-alpha family. G(s) subfamily. As to quaternary structure, heterotrimeric G proteins are composed of 3 units; alpha, beta and gamma. The alpha chain contains the guanine nucleotide binding site. Component of the TAS2R14-GNAS2 complex, consisting of TAS2R14, GNAS2, GNB1 and GNG2; within the complex interacts with TAS2R14; this complex plays a role in the perception of bitterness. Interacts with CRY1; the interaction may block GPCR-mediated regulation of cAMP concentrations. Interacts with ADCY6 and stimulates its adenylyl cyclase activity. Interacts with ADCY2 and ADCY5. Interacts (GDP-bound form) with RIC8B; promoting GNAS folding and association with the plasma membrane. Stimulates the ADCY5 adenylyl cyclase activity. Interaction with SASH1. Interacts with GASL2L2.

The protein localises to the cell membrane. The enzyme catalyses GTP + H2O = GDP + phosphate + H(+). Its function is as follows. Guanine nucleotide-binding proteins (G proteins) function as transducers in numerous signaling pathways controlled by G protein-coupled receptors (GPCRs). The alpha chain contains the guanine nucleotide binding site and alternates between an active, GTP-bound state and an inactive, GDP-bound state. Signaling by an activated GPCR promotes GDP release and GTP binding. The alpha subunit has a low GTPase activity that converts bound GTP to GDP, thereby terminating the signal. Both GDP release and GTP hydrolysis are modulated by numerous regulatory proteins. Signaling involves the activation of adenylyl cyclases, resulting in increased levels of the signaling molecule cAMP. Functions downstream of beta-adrenergic receptors. Stimulates the Ras signaling pathway via RAPGEF2. This is Guanine nucleotide-binding protein G(s) subunit alpha isoforms short (Gnas) from Mus musculus (Mouse).